The sequence spans 351 residues: N-formyl peptide receptor 2 (351 aa).

At 1–27 (METNFSTPLNEYEEVSYESAGYTVLRI) the chain is on the extracellular side. An N-linked (GlcNAc...) asparagine glycan is attached at Asn4. Residues 28–50 (LPLVVLGVTFVLGVLGNGLVIWV) traverse the membrane as a helical segment. Over 51–61 (AGFRMTRTVTT) the chain is Cytoplasmic. Residues 62–83 (ICYLNLALADFSFTATLPFLIV) form a helical membrane-spanning segment. The Extracellular portion of the chain corresponds to 84 to 100 (SMAMGEKWPFGWFLCKL). A disulfide bridge links Cys98 with Cys176. A helical transmembrane segment spans residues 101–121 (IHIVVDINLFGSVFLIGFIAL). Residues 122 to 140 (DRCICVLHPVWAQNHRTVS) are Cytoplasmic-facing. A helical transmembrane segment spans residues 141-162 (LAMKVIVGPWILALVLTLPVFL). Residues 163 to 205 (FLTTVTIPNGDTYCTFNFASWGGTPEERLKVAITMLTARGIIR) are Extracellular-facing. Residues 206-226 (FVIGFSLPMSIVAICYGLIAA) form a helical membrane-spanning segment. At 227–242 (KIHKKGMIKSSRPLRV) the chain is on the cytoplasmic side. A helical transmembrane segment spans residues 243–266 (LTAVVASFFICWFPFQLVALLGTV). The Extracellular segment spans residues 267 to 286 (WLKEMLFYGKYKIIDILVNP). A helical transmembrane segment spans residues 287–306 (TSSLAFFNSCLNPMLYVFVG). The Cytoplasmic segment spans residues 307–351 (QDFRERLIHSLPTSLERALSEDSAPTNDTAANSASPPAETELQAM). A disordered region spans residues 325–351 (LSEDSAPTNDTAANSASPPAETELQAM). The segment covering 329–341 (SAPTNDTAANSAS) has biased composition (polar residues).

This sequence belongs to the G-protein coupled receptor 1 family. Interacts with Amyloid-beta protein 42, product of APP; the interaction takes place at the cell surface and the complex is then rapidly internalized. As to quaternary structure, (Microbial infection) Interacts with Staphylococcus aureus protein SSL13; this interaction leads to the activation of neutrophils. Detected in lung, bone marrow, neutrophils, spleen and testis.

It localises to the cell membrane. Functionally, low affinity receptor for N-formyl-methionyl peptides, which are powerful neutrophil chemotactic factors. Binding of FMLP to the receptor causes activation of neutrophils. This response is mediated via a G-protein that activates a phosphatidylinositol-calcium second messenger system. The activation of LXA4R could result in an anti-inflammatory outcome counteracting the actions of pro-inflammatory signals such as LTB4 (leukotriene B4). Receptor for the chemokine-like protein FAM19A5, mediating FAM19A5-stimulated macrophage chemotaxis and the inhibitory effect on TNFSF11/RANKL-induced osteoclast differentiation. Acts as a receptor for humanin. This chain is N-formyl peptide receptor 2 (FPR2), found in Homo sapiens (Human).